The chain runs to 999 residues: uncharacterized protein (999 aa).

Residues 45 to 128 are compositionally biased toward low complexity; it reads NSNNIGNGNG…TPTITPSSPS (84 aa). The segment at 45–129 is disordered; sequence NSNNIGNGNG…PTITPSSPSV (85 aa). The stretch at 723 to 767 forms a coiled coil; that stretch reads YQQSQQQQSQQQQQQQQQQQQQQQQQQQQQQQQQQQQQQQQQQQQ. Positions 873–887 are enriched in low complexity; the sequence is NDINNANNSNNNNNN. The disordered stretch occupies residues 873-904; the sequence is NDINNANNSNNNNNNQSQVLLSPNRNKDGTLN. A helical membrane pass occupies residues 976–996; that stretch reads LFSLVLILAFIWFFFEIYFFF.

Its subcellular location is the membrane. This is an uncharacterized protein from Dictyostelium discoideum (Social amoeba).